A 393-amino-acid polypeptide reads, in one-letter code: Phosphopentomutase (393 aa).

6 residues coordinate Mn(2+): aspartate 11, aspartate 282, histidine 287, aspartate 323, histidine 324, and histidine 335.

The protein belongs to the phosphopentomutase family. Mn(2+) serves as cofactor.

The protein resides in the cytoplasm. It carries out the reaction 2-deoxy-alpha-D-ribose 1-phosphate = 2-deoxy-D-ribose 5-phosphate. It catalyses the reaction alpha-D-ribose 1-phosphate = D-ribose 5-phosphate. Its pathway is carbohydrate degradation; 2-deoxy-D-ribose 1-phosphate degradation; D-glyceraldehyde 3-phosphate and acetaldehyde from 2-deoxy-alpha-D-ribose 1-phosphate: step 1/2. Functionally, isomerase that catalyzes the conversion of deoxy-ribose 1-phosphate (dRib-1-P) and ribose 1-phosphate (Rib-1-P) to deoxy-ribose 5-phosphate (dRib-5-P) and ribose 5-phosphate (Rib-5-P), respectively. The sequence is that of Phosphopentomutase from Caldanaerobacter subterraneus subsp. tengcongensis (strain DSM 15242 / JCM 11007 / NBRC 100824 / MB4) (Thermoanaerobacter tengcongensis).